Consider the following 230-residue polypeptide: ATP synthase subunit a (230 aa).

The next 5 membrane-spanning stretches (helical) occupy residues 17-37 (LPIT…FIMA), 78-98 (IFPF…IGVI), 107-127 (DLSV…WFGI), 165-187 (LFGN…GFLV), and 198-218 (EAII…AGGI).

The protein belongs to the ATPase A chain family. In terms of assembly, F-type ATPases have 2 components, CF(1) - the catalytic core - and CF(0) - the membrane proton channel. CF(1) has five subunits: alpha(3), beta(3), gamma(1), delta(1), epsilon(1). CF(0) has three main subunits: a(1), b(2) and c(9-12). The alpha and beta chains form an alternating ring which encloses part of the gamma chain. CF(1) is attached to CF(0) by a central stalk formed by the gamma and epsilon chains, while a peripheral stalk is formed by the delta and b chains.

It localises to the cell inner membrane. Functionally, key component of the proton channel; it plays a direct role in the translocation of protons across the membrane. The sequence is that of ATP synthase subunit a from Legionella pneumophila (strain Paris).